Here is a 437-residue protein sequence, read N- to C-terminus: Transcription factor 12 (437 aa).

Disordered stretches follow at residues 1 to 68, 80 to 123, and 244 to 335; these read EFHD…QTGD, PDHT…YENS, and ASNT…ERRM. Residues 13-37 show a composition bias toward polar residues; sequence VSPTDISTSLPPMSSFHRGSTSSSP. At threonine 44 the chain carries Phosphothreonine. Serine 64 carries the phosphoserine modification. Residues 83-94 show a composition bias toward low complexity; it reads TSSSFPSNPSTP. Polar residues-rich tracts occupy residues 95-107 and 114-123; these read VGSP…TSQW and APSSPSYENS. Basic and acidic residues-rich tracts occupy residues 273-285 and 291-306; these read IKTE…ENLH and DDMK…DIKV. A Glycyl lysine isopeptide (Lys-Gly) (interchain with G-Cter in SUMO2) cross-link involves residue lysine 274. Residue serine 295 is modified to Phosphoserine. A Glycyl lysine isopeptide (Lys-Gly) (interchain with G-Cter in SUMO2) cross-link involves residue lysine 305. Threonine 312 is subject to Phosphothreonine. 2 positions are modified to phosphoserine: serine 313 and serine 314. Residues 323-335 are compositionally biased toward basic and acidic residues; the sequence is PEQKIEREKERRM. The bHLH domain occupies 332-385; the sequence is ERRMANNARERLRVRDINEAFKELGRMCQLHLKSEKPQTKLLILHQAVAVILSL. Glycyl lysine isopeptide (Lys-Gly) (interchain with G-Cter in SUMO2) cross-links involve residues lysine 364 and lysine 408. The segment at 387-410 is class A specific domain; sequence QQVRERNLNPKAACLKRREEEKVS. The segment at 405–437 is disordered; that stretch reads EEEKVSAASAEPPTTLPGTHPGLSETTNPMGHL. Residues 416 to 427 show a composition bias toward low complexity; it reads PPTTLPGTHPGL. The segment covering 428-437 has biased composition (polar residues); sequence SETTNPMGHL.

In terms of assembly, efficient DNA binding requires dimerization with another bHLH protein. Forms homo- or heterooligomers with myogenin, E12 and ITF2 proteins. Interacts with NEUROD2. Interacts with PTF1A. Interacts with RUNX1T1. Interacts with BHLHA9.

The protein localises to the nucleus. Transcriptional regulator. Involved in the initiation of neuronal differentiation. Activates transcription by binding to the E box (5'-CANNTG-3'). Participates in the control of inducible RP4 gene expression in salivary cells. Binds to the RIPE3 element of the insulin II promoter. May be involved in the functional network that regulates the development of the GnRH axis. The polypeptide is Transcription factor 12 (TCF12) (Mesocricetus auratus (Golden hamster)).